The primary structure comprises 414 residues: MSELIIKGQNAKNASYDLGIASTKQKDDALMIMAEELIKAKGDIISANKIDLDAAVLKGTSKAMLDRLALTDERIESMAAGLKDVIKLQDPIGEVISMWQRPNGLQIGQKRVPLGVIGIIYEARPNVTCDAAGLCIKTGNAVILRGGSEAINSNKAIVKALTKGIERSGLPKASVQLVEDTSREVATEMMRLNEFIDVLIPRGGAGLIQAVLKNATVPVIETGTGNCHIYVDKDCDFEMAKNIVINAKASRPSVCNAAEKLLINEKIVEDFLPIVVKALRENGVAVKGDEVSQSIINDIEKAAEEDWGKEYLDYIIAVKVVKDVDEAISHINKYGTGHSEAIITESYKNSQKFLQRVDAAAVYVNASTRFTDGSEFGFGAEIGISTQKLHARGPMGLKELTTIKYIIYGNGQIR.

This sequence belongs to the gamma-glutamyl phosphate reductase family.

It is found in the cytoplasm. It catalyses the reaction L-glutamate 5-semialdehyde + phosphate + NADP(+) = L-glutamyl 5-phosphate + NADPH + H(+). Its pathway is amino-acid biosynthesis; L-proline biosynthesis; L-glutamate 5-semialdehyde from L-glutamate: step 2/2. Functionally, catalyzes the NADPH-dependent reduction of L-glutamate 5-phosphate into L-glutamate 5-semialdehyde and phosphate. The product spontaneously undergoes cyclization to form 1-pyrroline-5-carboxylate. This chain is Gamma-glutamyl phosphate reductase, found in Clostridium beijerinckii (strain ATCC 51743 / NCIMB 8052) (Clostridium acetobutylicum).